An 883-amino-acid chain; its full sequence is Kinesin-like protein 5 (883 aa).

Residues 6–390 form the Kinesin motor domain; sequence SITVTVRVRP…LKYANRAKNI (385 aa). Position 144-151 (144-151) interacts with ATP; it reads GATGCGKT. Coiled-coil stretches lie at residues 396–435 and 563–588; these read RNMI…SSQS and LQDE…VDEF. The segment at 755-785 is disordered; the sequence is VSPMLEDKPEPGLLIKSPLEKKQEVNSESTQ.

Belongs to the TRAFAC class myosin-kinesin ATPase superfamily. Kinesin family. Kinesin II subfamily. Heterodimer with klp6.

Its subcellular location is the cytoplasm. The protein resides in the cytoskeleton. It is found in the chromosome. The protein localises to the centromere. It localises to the kinetochore. Its subcellular location is the spindle. Functionally, has a role in establishing metaphase during mitosis. Required for chromosome segregation where it generates tension during kinetochore capturing. The sequence is that of Kinesin-like protein 5 (klp5) from Schizosaccharomyces pombe (strain 972 / ATCC 24843) (Fission yeast).